A 275-amino-acid polypeptide reads, in one-letter code: Putative Ig-like V-type domain-containing protein FPV055 (275 aa).

2 Ig-like V-type domains span residues Lys-25–Gly-122 and Pro-140–Ser-239.

This Fowlpox virus (strain NVSL) (FPV) protein is Putative Ig-like V-type domain-containing protein FPV055.